A 223-amino-acid chain; its full sequence is RNA-free ribonuclease P (223 aa).

This sequence belongs to the HARP family.

It carries out the reaction Endonucleolytic cleavage of RNA, removing 5'-extranucleotides from tRNA precursor.. Its function is as follows. RNA-free RNase P that catalyzes the removal of the 5'-leader sequence from pre-tRNA to produce the mature 5'-terminus. The polypeptide is RNA-free ribonuclease P (Methanococcus maripaludis (strain C6 / ATCC BAA-1332)).